A 142-amino-acid polypeptide reads, in one-letter code: Large ribosomal subunit protein uL13 (142 aa).

This sequence belongs to the universal ribosomal protein uL13 family. Part of the 50S ribosomal subunit.

In terms of biological role, this protein is one of the early assembly proteins of the 50S ribosomal subunit, although it is not seen to bind rRNA by itself. It is important during the early stages of 50S assembly. The polypeptide is Large ribosomal subunit protein uL13 (Shewanella frigidimarina (strain NCIMB 400)).